A 45-amino-acid chain; its full sequence is Mu-conotoxin-like Cal 12.1.2c (45 aa).

Intrachain disulfides connect Cys-3-Cys-16, Cys-11-Cys-28, Cys-18-Cys-33, and Cys-27-Cys-39. Position 23 is a 4-hydroxyproline (Pro-23). 6'-bromotryptophan is present on residues Trp-37 and Trp-38. Position 40 is a 4-hydroxyproline (Pro-40). The residue at position 44 (Trp-44) is a 6'-bromotryptophan.

In terms of tissue distribution, expressed by the venom duct.

It localises to the secreted. Functionally, mu-conotoxins block voltage-gated sodium channels. This toxin reversibly blocks voltage-gated sodium channel in cephalopods, with no alteration in the voltage dependence of sodium conductance or on the kinetics of inactivation. In Californiconus californicus (California cone), this protein is Mu-conotoxin-like Cal 12.1.2c.